A 1612-amino-acid chain; its full sequence is Phospholipid-transporting ATPase DNF2 (1612 aa).

The tract at residues 1-74 (MSSPSKPTSP…MKDISTPDLS (74 aa)) is disordered. The Cytoplasmic segment spans residues 1–252 (MSSPSKPTSP…TFFPKNILFQ (252 aa)). Residues 20–30 (GSASNGLSSMS) show a composition bias toward low complexity. At threonine 70 the chain carries Phosphothreonine. Serine 85 carries the post-translational modification Phosphoserine. The helical transmembrane segment at 253–273 (FHNFANIYFLILLILGAFQIF) threads the bilayer. Residues 272 to 279 (IFGVTNPG) are involved in phosphatidylcholine substrate selection. The Extracellular segment spans residues 274 to 277 (GVTN). The helical transmembrane segment at 278-298 (PGFASVPLIVIVIITAIKDGI) threads the bilayer. The Cytoplasmic portion of the chain corresponds to 299-598 (EDSRRTVLDL…RISRELNFSV (300 aa)). Residues 364–373 (KLQKKREELR) are compositionally biased toward basic and acidic residues. Residues 364 to 384 (KLQKKREELRRKRNSRSFGPR) are disordered. Serine 389, serine 392, serine 396, and serine 403 each carry phosphoserine. Tyrosine 406 carries the phosphotyrosine modification. A helical transmembrane segment spans residues 599–619 (ILNFVLLFILCFTAGIVNGVY). Residues 620-639 (YKQKPRSRDYFEFGTIGGSA) are Extracellular-facing. The interval 631–635 (EFGTI) is involved in phosphatidylcholine substrate selection. A helical transmembrane segment spans residues 640 to 660 (STNGFVSFWVAVILYQSLVPI). The Cytoplasmic segment spans residues 661-1231 (SLYISVEIIK…WCYKRLAEMI (571 aa)). Catalysis depends on aspartate 712, which acts as the 4-aspartylphosphate intermediate. Residues aspartate 712, lysine 713, and threonine 714 each coordinate ATP. Position 712 (aspartate 712) interacts with Mg(2+). Threonine 714 contacts Mg(2+). Position 782 is a phosphothreonine (threonine 782). ATP contacts are provided by glutamate 846, phenylalanine 887, serine 889, lysine 892, and lysine 916. Residue lysine 938 forms a Glycyl lysine isopeptide (Lys-Gly) (interchain with G-Cter in ubiquitin) linkage. Residues arginine 952, threonine 953, threonine 1032, glycine 1033, aspartate 1034, arginine 1147, and lysine 1153 each contribute to the ATP site. Aspartate 1173 is a Mg(2+) binding site. ATP contacts are provided by asparagine 1176 and aspartate 1177. Residue aspartate 1177 coordinates Mg(2+). A helical transmembrane segment spans residues 1232-1252 (PQFFYKNVIFTLSLFWYGIYN). Residues 1253-1262 (NFDGSYLFEY) lie on the Extracellular side of the membrane. Residues 1263–1283 (TYLTFYNLAFTSVPVILLAVL) form a helical membrane-spanning segment. Topologically, residues 1284 to 1313 (DQDVSDTVSMLVPQLYRVGILRKEWNQTKF) are cytoplasmic. Residues 1314 to 1334 (LWYMLDGVYQSVICFFFPYLA) traverse the membrane as a helical segment. At 1335-1350 (YHKNMVVTENGLGLDH) the chain is on the extracellular side. The chain crosses the membrane as a helical span at residues 1351 to 1371 (RYFVGVFVTAIAVTSCNFYVF). Residues 1372–1377 (MEQYRW) lie on the Cytoplasmic side of the membrane. A helical transmembrane segment spans residues 1378 to 1398 (DWFCGLFICLSLAVFYGWTGI). At 1399-1418 (WTSSSSSNEFYKGAARVFAQ) the chain is on the extracellular side. The chain crosses the membrane as a helical span at residues 1419–1439 (PAYWAVLFVGVLFCLLPRFTI). Residue arginine 1436 coordinates a 1,2-diacyl-sn-glycero-3-phospho-L-serine. Residues 1440-1612 (DCIRKIFYPK…TLLSQRSRDR (173 aa)) lie on the Cytoplasmic side of the membrane. Position 1542 is a phosphoserine (serine 1542). A disordered region spans residues 1544 to 1563 (VTTTNNLPRRSMASARGNKL). Residue serine 1592 is modified to Phosphoserine.

Belongs to the cation transport ATPase (P-type) (TC 3.A.3) family. Type IV subfamily. In terms of assembly, component of a flippase complex consisting of DNF1 and LEM3. Interacts with LEM3; the interaction is direct. Requires Mg(2+) as cofactor. Post-translationally, phosphorylated by FPK1 and KIN82.

It localises to the cell membrane. The enzyme catalyses ATP + H2O + phospholipidSide 1 = ADP + phosphate + phospholipidSide 2.. It catalyses the reaction a 1,2-diacyl-sn-glycero-3-phosphoethanolamine(out) + ATP + H2O = a 1,2-diacyl-sn-glycero-3-phosphoethanolamine(in) + ADP + phosphate + H(+). It carries out the reaction a 1,2-diacyl-sn-glycero-3-phosphocholine(out) + ATP + H2O = a 1,2-diacyl-sn-glycero-3-phosphocholine(in) + ADP + phosphate + H(+). The catalysed reaction is a beta-D-glucosyl-(1&lt;-&gt;1')-N-acylsphing-4-enine(out) + ATP + H2O = a beta-D-glucosyl-(1&lt;-&gt;1')-N-acylsphing-4-enine(in) + ADP + phosphate + H(+). The enzyme catalyses a 1,2-diacyl-sn-glycero-3-phospho-L-serine(out) + ATP + H2O = a 1,2-diacyl-sn-glycero-3-phospho-L-serine(in) + ADP + phosphate + H(+). Phosphatidylcholine flippase activity is inhibited by glucosylsphingosine, lactosylsphingosine, lysophosphatidylcholine and to a lesser degree sphingosine-1-phosphate and lysosphingomyelin. Glucosylceramide flippase activity is inhibited by lysophosphatidylcholine, glucosylsphingosine and to a lesser degree lactosylsphingosine whereas lysosphingomyelin has a stimulatory effect at low concentrations. Functionally, catalytic component of a P4-ATPase flippase complex which catalyzes the hydrolysis of ATP coupled to the transport of glucosylceramide, phosphatidylcholine, phosphatidylethanolamine, and small amounts of phosphatidylserine from the lumenal to the cytosolic leaflet of the cell membrane and ensures the maintenance of asymmetric distribution of phospholipids. Does not appear to transport sphingomyelin, inositol phosphoceramide or phosphatidic acid. Required for efficient endocytosis. Required for protein transport from Golgi to vacuoles. The polypeptide is Phospholipid-transporting ATPase DNF2 (DNF2) (Saccharomyces cerevisiae (strain ATCC 204508 / S288c) (Baker's yeast)).